A 224-amino-acid polypeptide reads, in one-letter code: Urease accessory protein UreF (224 aa).

Belongs to the UreF family. In terms of assembly, ureD, UreF and UreG form a complex that acts as a GTP-hydrolysis-dependent molecular chaperone, activating the urease apoprotein by helping to assemble the nickel containing metallocenter of UreC. The UreE protein probably delivers the nickel.

Its subcellular location is the cytoplasm. Its function is as follows. Required for maturation of urease via the functional incorporation of the urease nickel metallocenter. The chain is Urease accessory protein UreF from Pseudomonas putida (strain ATCC 47054 / DSM 6125 / CFBP 8728 / NCIMB 11950 / KT2440).